We begin with the raw amino-acid sequence, 243 residues long: Outer membrane protein A (243 aa).

A run of 5 beta stranded transmembrane segments spans residues 1–8, 13–21, 48–57, 62–69, and 88–96; these read LAAKLSYP, LDIYTRLGG, PLAAVGVEYA, WATRLDYQ, and MLSLGVSYR. A run of 5 repeats spans residues 104-105, 106-107, 108-109, 110-111, and 112-113. The segment at 104-113 is 5 X 2 AA tandem repeats of A-P; the sequence is APAPAPAPAP. An OmpA-like domain is found at 115-243; the sequence is VETKLFTLKS…RRVEIEVKGI (129 aa). Cysteine 215 and cysteine 229 form a disulfide bridge.

The protein belongs to the outer membrane OOP (TC 1.B.6) superfamily. OmpA family. In terms of assembly, monomer and homodimer.

It localises to the cell outer membrane. Functionally, with TolR probably plays a role in maintaining the position of the peptidoglycan cell wall in the periplasm. Acts as a porin with low permeability that allows slow penetration of small solutes; an internal gate slows down solute passage. The protein is Outer membrane protein A of Serratia odorifera.